The sequence spans 339 residues: Heme A synthase (339 aa).

A run of 8 helical transmembrane segments spans residues 7 to 27 (VIIW…VGGI), 92 to 112 (HRFI…YFLI), 126 to 146 (ILLG…KSGL), 159 to 179 (LHLT…LDLI), 199 to 219 (AIII…AGLI), 254 to 274 (VQFV…FLTF), 291 to 311 (ALLI…LYSV), and 312 to 332 (PLWL…TTTY). Position 258 (H258) interacts with heme. H319 is a heme binding site.

It belongs to the COX15/CtaA family. Type 2 subfamily. In terms of assembly, interacts with CtaB. Heme b serves as cofactor.

It localises to the cell membrane. It carries out the reaction Fe(II)-heme o + 2 A + H2O = Fe(II)-heme a + 2 AH2. It participates in porphyrin-containing compound metabolism; heme A biosynthesis; heme A from heme O: step 1/1. Its function is as follows. Catalyzes the conversion of heme O to heme A by two successive hydroxylations of the methyl group at C8. The first hydroxylation forms heme I, the second hydroxylation results in an unstable dihydroxymethyl group, which spontaneously dehydrates, resulting in the formyl group of heme A. This is Heme A synthase from Flavobacterium psychrophilum (strain ATCC 49511 / DSM 21280 / CIP 103535 / JIP02/86).